The following is a 214-amino-acid chain: Phosphatidylserine decarboxylase proenzyme (214 aa).

S183 (schiff-base intermediate with substrate; via pyruvic acid) is an active-site residue. Pyruvic acid (Ser); by autocatalysis is present on S183.

Belongs to the phosphatidylserine decarboxylase family. PSD-A subfamily. As to quaternary structure, heterodimer of a large membrane-associated beta subunit and a small pyruvoyl-containing alpha subunit. Pyruvate is required as a cofactor. Post-translationally, is synthesized initially as an inactive proenzyme. Formation of the active enzyme involves a self-maturation process in which the active site pyruvoyl group is generated from an internal serine residue via an autocatalytic post-translational modification. Two non-identical subunits are generated from the proenzyme in this reaction, and the pyruvate is formed at the N-terminus of the alpha chain, which is derived from the carboxyl end of the proenzyme. The post-translation cleavage follows an unusual pathway, termed non-hydrolytic serinolysis, in which the side chain hydroxyl group of the serine supplies its oxygen atom to form the C-terminus of the beta chain, while the remainder of the serine residue undergoes an oxidative deamination to produce ammonia and the pyruvoyl prosthetic group on the alpha chain.

It is found in the cell membrane. It carries out the reaction a 1,2-diacyl-sn-glycero-3-phospho-L-serine + H(+) = a 1,2-diacyl-sn-glycero-3-phosphoethanolamine + CO2. Its pathway is phospholipid metabolism; phosphatidylethanolamine biosynthesis; phosphatidylethanolamine from CDP-diacylglycerol: step 2/2. Catalyzes the formation of phosphatidylethanolamine (PtdEtn) from phosphatidylserine (PtdSer). The protein is Phosphatidylserine decarboxylase proenzyme of Syntrophotalea carbinolica (strain DSM 2380 / NBRC 103641 / GraBd1) (Pelobacter carbinolicus).